A 436-amino-acid chain; its full sequence is Glutamyl-tRNA reductase (436 aa).

Residues 50-53 (TCNR), S110, 115-117 (ETQ), and Q121 each bind substrate. C51 serves as the catalytic Nucleophile. Position 190–195 (190–195 (GLGEMS)) interacts with NADP(+).

The protein belongs to the glutamyl-tRNA reductase family. In terms of assembly, homodimer.

The enzyme catalyses (S)-4-amino-5-oxopentanoate + tRNA(Glu) + NADP(+) = L-glutamyl-tRNA(Glu) + NADPH + H(+). It participates in porphyrin-containing compound metabolism; protoporphyrin-IX biosynthesis; 5-aminolevulinate from L-glutamyl-tRNA(Glu): step 1/2. Its function is as follows. Catalyzes the NADPH-dependent reduction of glutamyl-tRNA(Glu) to glutamate 1-semialdehyde (GSA). In Wolinella succinogenes (strain ATCC 29543 / DSM 1740 / CCUG 13145 / JCM 31913 / LMG 7466 / NCTC 11488 / FDC 602W) (Vibrio succinogenes), this protein is Glutamyl-tRNA reductase.